The following is a 224-amino-acid chain: Heme response regulator HssR (224 aa).

One can recognise a Response regulatory domain in the interval 3–116 (QCLVVDDDPR…ELIFRIRAVL (114 aa)). D52 is subject to 4-aspartylphosphate. The ompR/PhoB-type DNA-binding region spans 124–222 (NSEMTIGNLT…VRGQGYKVEN (99 aa)).

In terms of processing, phosphorylated by HssS.

Its subcellular location is the cytoplasm. Functionally, member of the two-component regulatory system HssS/HssR involved in intracellular heme homeostasis and tempering of staphylococcal virulence. Phosphorylated HssR binds to a direct repeat sequence within hrtAB promoter and activates the expression of hrtAB, an efflux pump, in response to extracellular heme, hemin, hemoglobin or blood. This Staphylococcus aureus (strain MRSA252) protein is Heme response regulator HssR (hssR).